A 720-amino-acid chain; its full sequence is DNA ligase (720 aa).

NAD(+) contacts are provided by residues 60-64 (DYDYD), 109-110 (SL), and Glu140. The active-site N6-AMP-lysine intermediate is the Lys142. Residues Arg163 and Glu201 each coordinate NAD(+). Positions 220 to 239 (GLPPFANPRNAAAGSIRQKD) are disordered. 2 residues coordinate NAD(+): Lys320 and Lys344. Residues Cys438, Cys441, Cys456, and Cys461 each coordinate Zn(2+). The region spanning 619–709 (KVADVLKGKT…VDLEKIKKED (91 aa)) is the BRCT domain.

The protein belongs to the NAD-dependent DNA ligase family. LigA subfamily. Requires Mn(2+) as cofactor. It depends on Mg(2+) as a cofactor.

The catalysed reaction is NAD(+) + (deoxyribonucleotide)n-3'-hydroxyl + 5'-phospho-(deoxyribonucleotide)m = (deoxyribonucleotide)n+m + AMP + beta-nicotinamide D-nucleotide.. Its function is as follows. DNA ligase that catalyzes the formation of phosphodiester linkages between 5'-phosphoryl and 3'-hydroxyl groups in double-stranded DNA using NAD as a coenzyme and as the energy source for the reaction. It is essential for DNA replication and repair of damaged DNA. The protein is DNA ligase of Aquifex aeolicus (strain VF5).